An 816-amino-acid polypeptide reads, in one-letter code: Microbial collagenase (816 aa).

Positions 1–27 are cleaved as a signal peptide; that stretch reads MSHIRFFPRHRLALACMLASVSSFSFA. Zn(2+) is bound at residue His-435. Glu-436 is an active-site residue. His-439 provides a ligand contact to Zn(2+).

The protein belongs to the peptidase M9A family. Zn(2+) is required as a cofactor.

It localises to the secreted. The enzyme catalyses Digestion of native collagen in the triple helical region at Xaa-|-Gly bonds. With synthetic peptides, a preference is shown for Gly at P3 and P1', Pro and Ala at P2 and P2', and hydroxyproline, Ala or Arg at P3'.. Functionally, possesses gelatinolytic activity. Can cause weak haemolysis on blood agar. In Vibrio parahaemolyticus serotype O3:K6 (strain RIMD 2210633), this protein is Microbial collagenase (prt).